A 281-amino-acid chain; its full sequence is Probable endonuclease 4 (281 aa).

Zn(2+) is bound by residues H69, H109, E145, D179, H182, H216, D229, H231, and E261.

Belongs to the AP endonuclease 2 family. The cofactor is Zn(2+).

The enzyme catalyses Endonucleolytic cleavage to 5'-phosphooligonucleotide end-products.. Its function is as follows. Endonuclease IV plays a role in DNA repair. It cleaves phosphodiester bonds at apurinic or apyrimidinic (AP) sites, generating a 3'-hydroxyl group and a 5'-terminal sugar phosphate. The chain is Probable endonuclease 4 from Parabacteroides distasonis (strain ATCC 8503 / DSM 20701 / CIP 104284 / JCM 5825 / NCTC 11152).